The sequence spans 213 residues: Phospho-2-dehydro-3-deoxyheptonate aldolase, Tyr-sensitive (213 aa).

It belongs to the class-I DAHP synthase family.

The catalysed reaction is D-erythrose 4-phosphate + phosphoenolpyruvate + H2O = 7-phospho-2-dehydro-3-deoxy-D-arabino-heptonate + phosphate. Its pathway is metabolic intermediate biosynthesis; chorismate biosynthesis; chorismate from D-erythrose 4-phosphate and phosphoenolpyruvate: step 1/7. Functionally, stereospecific condensation of phosphoenolpyruvate (PEP) and D-erythrose-4-phosphate (E4P) giving rise to 3-deoxy-D-arabino-heptulosonate-7-phosphate (DAHP). The polypeptide is Phospho-2-dehydro-3-deoxyheptonate aldolase, Tyr-sensitive (aroF) (Enterobacter agglomerans (Erwinia herbicola)).